The chain runs to 252 residues: Large ribosomal subunit protein uL3 (252 aa).

N5-methylglutamine is present on Gln-169.

This sequence belongs to the universal ribosomal protein uL3 family. Part of the 50S ribosomal subunit. Forms a cluster with proteins L14 and L19. Post-translationally, methylated by PrmB.

Functionally, one of the primary rRNA binding proteins, it binds directly near the 3'-end of the 23S rRNA, where it nucleates assembly of the 50S subunit. The chain is Large ribosomal subunit protein uL3 from Hyphomonas neptunium (strain ATCC 15444).